The primary structure comprises 144 residues: Small polypeptide DEVIL 18 (144 aa).

Positions 30–58 (SFSTKTSSSSSKPVFTRSFSTKPTSYSSS) are enriched in low complexity. The tract at residues 30–89 (SFSTKTSSSSSKPVFTRSFSTKPTSYSSSEPIFRRSFSAKPTSSKSPFLSRSGSTKCPVD) is disordered. A helical transmembrane segment spans residues 42 to 58 (PVFTRSFSTKPTSYSSS). Over residues 68 to 84 (AKPTSSKSPFLSRSGST) the composition is skewed to polar residues. The tract at residues 108-139 (SVTRKCRNMAKEHKSRFYIMKRCVLMLVCWHK) is required for DVL/RTFL small polypeptide activity.

This sequence belongs to the DVL/RTFL small polypeptides family.

Its subcellular location is the cell membrane. Functionally, small polypeptide acting as a regulatory molecule which coordinates cellular responses required for differentiation, growth and development, probably by restricting polar cell proliferation in lateral organs and coordinating socket cell recruitment and differentiation at trichome sites. The chain is Small polypeptide DEVIL 18 from Arabidopsis thaliana (Mouse-ear cress).